A 430-amino-acid chain; its full sequence is Protein arginine methyltransferase NDUFAF7, mitochondrial (430 aa).

Residues Met1–Thr31 constitute a mitochondrion transit peptide.

It belongs to the NDUFAF7 family.

The protein resides in the mitochondrion. The catalysed reaction is L-arginyl-[protein] + 2 S-adenosyl-L-methionine = N(omega),N(omega)'-dimethyl-L-arginyl-[protein] + 2 S-adenosyl-L-homocysteine + 2 H(+). Arginine methyltransferase involved in the assembly or stability of mitochondrial NADH:ubiquinone oxidoreductase complex (complex I). Acts by mediating symmetric dimethylation of 'Arg-118' of ndufs2 after it assembles into the complex I, stabilizing the early intermediate complex. The sequence is that of Protein arginine methyltransferase NDUFAF7, mitochondrial from Xenopus tropicalis (Western clawed frog).